A 405-amino-acid polypeptide reads, in one-letter code: NADH-quinone oxidoreductase subunit D (405 aa).

This sequence belongs to the complex I 49 kDa subunit family. In terms of assembly, NDH-1 is composed of 14 different subunits. Subunits NuoB, C, D, E, F, and G constitute the peripheral sector of the complex.

The protein localises to the cell inner membrane. The enzyme catalyses a quinone + NADH + 5 H(+)(in) = a quinol + NAD(+) + 4 H(+)(out). Functionally, NDH-1 shuttles electrons from NADH, via FMN and iron-sulfur (Fe-S) centers, to quinones in the respiratory chain. The immediate electron acceptor for the enzyme in this species is believed to be ubiquinone. Couples the redox reaction to proton translocation (for every two electrons transferred, four hydrogen ions are translocated across the cytoplasmic membrane), and thus conserves the redox energy in a proton gradient. In Afipia carboxidovorans (strain ATCC 49405 / DSM 1227 / KCTC 32145 / OM5) (Oligotropha carboxidovorans), this protein is NADH-quinone oxidoreductase subunit D.